The sequence spans 456 residues: Methylenetetrahydrofolate--tRNA-(uracil-5-)-methyltransferase TrmFO (456 aa).

Residue 11-16 (GAGLAG) participates in FAD binding.

It belongs to the MnmG family. TrmFO subfamily. The cofactor is FAD.

The protein resides in the cytoplasm. It carries out the reaction uridine(54) in tRNA + (6R)-5,10-methylene-5,6,7,8-tetrahydrofolate + NADH + H(+) = 5-methyluridine(54) in tRNA + (6S)-5,6,7,8-tetrahydrofolate + NAD(+). The enzyme catalyses uridine(54) in tRNA + (6R)-5,10-methylene-5,6,7,8-tetrahydrofolate + NADPH + H(+) = 5-methyluridine(54) in tRNA + (6S)-5,6,7,8-tetrahydrofolate + NADP(+). Catalyzes the folate-dependent formation of 5-methyl-uridine at position 54 (M-5-U54) in all tRNAs. In Synechococcus sp. (strain CC9605), this protein is Methylenetetrahydrofolate--tRNA-(uracil-5-)-methyltransferase TrmFO.